The chain runs to 613 residues: Ribosome-associated molecular chaperone SSB (613 aa).

The interval 1–391 (MADGVFQGAI…ILTGQSTSDE (391 aa)) is nucleotide binding domain (NBD). ATP contacts are provided by residues 16–18 (TTY), Lys-73, 205–207 (GGT), 271–278 (ERAKRTLS), and Gly-342. Positions 392–402 (TKDLLLLDVAP) are inter-domain linker. The segment at 403–613 (LSLGVGMQGD…RVVTKAMSSR (211 aa)) is substrate binding domain (SBD). Residues 516 to 612 (SEDIEKMVNQ…KRVVTKAMSS (97 aa)) form a lid domain (SBDalpha) region. A Nuclear export signal motif is present at residues 574-582 (IEAALADAL).

Belongs to the heat shock protein 70 family. Ssb-type Hsp70 subfamily. Binds to ribosomes. Binds close to the ribosomal tunnel exit via contacts with both ribosomal proteins and rRNA. Directly interacts with nascent polypeptides. This interaction is dependent on the ribosome-associated complex (RAC). Interacts with SSE1. Interacts with FES1.

It localises to the cytoplasm. It catalyses the reaction ATP + H2O = ADP + phosphate + H(+). Functionally, ribosome-bound, Hsp70-type chaperone that assists in the cotranslational folding of newly synthesized proteins in the cytosol. Stimulates folding by interacting with nascent chains, binding to short, largely hydrophobic sequences exposed by unfolded proteins, thereby stabilizing longer, more slowly translated, and aggregation-prone nascent polypeptides and domains that cannot fold stably until fully synthesized. The Hsp70-protein substrate interaction depends on ATP-binding and on allosteric regulation between the NBD and the SBD. The ATP-bound state is characterized by a fast exchange rate of substrate (low affinity state), while in the ADP-bound state exchange is much slower (high affinity state). During the Hsp70 cycle, the chaperone switches between the ATP-bound state (open conformation) and the ADP-bound state (closed conformation) by major conformational rearrangements involving mainly the lid domain. Ssb cooperates with a specific Hsp40/Hsp70 co-chaperone termed the ribosome-associated complex (RAC), which stimulates the ATPase activity of the ribosome-associated pool of Ssbs and switches it to the high affinity substrate binding state. Hsp110 chaperone SSE1 and FES1 act as nucleotide exchange factors that cause substrate release. This chain is Ribosome-associated molecular chaperone SSB (SSB1), found in Candida glabrata (strain ATCC 2001 / BCRC 20586 / JCM 3761 / NBRC 0622 / NRRL Y-65 / CBS 138) (Yeast).